The sequence spans 482 residues: Uric acid transporter UacT (482 aa).

The Cytoplasmic segment spans residues 1 to 29 (MSAIDSQLPSSSGQDRPTDEVDRILSPGK). Residues 30–50 (LIILGLQHVLVMYAGAVAVPL) form a helical membrane-spanning segment. The Periplasmic segment spans residues 51 to 62 (MIGDRLGLSKEA). Residues 63 to 83 (IAMLISSDLFCCGIVTLLQCI) traverse the membrane as a helical segment. The Cytoplasmic portion of the chain corresponds to 84 to 92 (GIGRFMGIR). Residues 93 to 113 (LPVIMSVTFAAVTPMIAIGMN) form a helical membrane-spanning segment. The Periplasmic segment spans residues 114–115 (PD). A helical membrane pass occupies residues 116–136 (IGLLGIFGATIAAGFITTLLA). The Cytoplasmic segment spans residues 137-142 (PLIGRL). The helical transmembrane segment at 143 to 163 (MPLFPPLVTGVVITSIGLSII) threads the bilayer. Residues 164–178 (QVGIDWAAGGKGNPQ) lie on the Periplasmic side of the membrane. The chain crosses the membrane as a helical span at residues 179–199 (YGNPVYLGISFAVLIFILLIT). Residues 200-204 (RYAKG) lie on the Cytoplasmic side of the membrane. A helical membrane pass occupies residues 205 to 225 (FMSNVAVLLGIVFGFLLSWMM). Over 226–261 (NEVNLSGLHDASWFAIVTPMSFGMPIFDPVSILTMT) the chain is Periplasmic. Residues 262 to 282 (AVLIIVFIESMGMFLALGEIV) traverse the membrane as a helical segment. At 283–337 (GRKLSSHDIIRGLRVDGVGTMIGGTFNSFPHTSFSQNVGLVSVTRVHSRWVCISS) the chain is on the cytoplasmic side. The helical transmembrane segment at 338-358 (GIILILFGMVPKMAVLVASIP) threads the bilayer. Residue Gln-359 is a topological domain, periplasmic. A helical membrane pass occupies residues 360–380 (FVLGGAGLVMFGMVLATGIRI). Residues 381 to 392 (LSRCNYTTNRYN) are Cytoplasmic-facing. The chain crosses the membrane as a helical span at residues 393-413 (LYIVAISLGVGMTPTLSHDFF). The Periplasmic portion of the chain corresponds to 414–421 (SKLPAVLQ). A helical transmembrane segment spans residues 422-442 (PLLHSGIMLATLSAVVLNVFF). Topologically, residues 443–482 (NGYQHHADLVKESVSDKDLKVRTVRMWLLMRKLKKNEHGE) are cytoplasmic.

It belongs to the nucleobase:cation symporter-2 (NCS2) (TC 2.A.40) family.

It localises to the cell inner membrane. Its activity is regulated as follows. Inhibited in the presence of the protonophore carbonyl cyanide m-chlorophenyl hydrazone. Its function is as follows. Proton-dependent high-capacity transporter for uric acid. Also shows a low capacity for transport of xanthine at 37 degrees Celsius but not at 25 degrees Celsius. In Escherichia coli (strain K12), this protein is Uric acid transporter UacT (uacT).